A 102-amino-acid polypeptide reads, in one-letter code: Simukunin (102 aa).

Residues 1 to 19 (MNILPISAFFLLYLGHSLA) form the signal peptide. The region spanning 24–74 (CNLPVDEGVCRALFKRFYYEPATDSCKEFYYGGCEGNGNRFKSKKECILKC) is the BPTI/Kunitz inhibitor domain. 3 disulfide bridges follow: Cys24–Cys74, Cys33–Cys57, and Cys49–Cys70. The span at 83–92 (TRKRKPKKTT) shows a compositional bias: basic residues. Positions 83 to 102 (TRKRKPKKTTKPPIPIISLD) are disordered.

This sequence belongs to the venom Kunitz-type family. Interacts with mouse, bovine and human coagulation factor X (F10) (activated). Interacts with host elastase. In terms of tissue distribution, salivary gland (at protein level). Not detected in female carcass without head and salivary glands. Not detected in males.

The protein resides in the secreted. Salivary anticoagulant that inhibits plasma clotting in the host. Strongly inhibits host elastase, coagulation factors Xa (F10) and cathepsin G (CTSG). Inhibits host plasmin (PLG), kallikrein, trypsin, beta-tryptase and coagulation factor XIa (F11). This is Simukunin from Simulium vittatum (Striped black fly).